We begin with the raw amino-acid sequence, 71 residues long: Large ribosomal subunit protein uL29 (71 aa).

The protein belongs to the universal ribosomal protein uL29 family.

This is Large ribosomal subunit protein uL29 from Roseiflexus sp. (strain RS-1).